The chain runs to 326 residues: Meiotically up-regulated gene 113 protein (326 aa).

Its subcellular location is the cytoplasm. Functionally, has a role in meiosis. The polypeptide is Meiotically up-regulated gene 113 protein (mug113) (Schizosaccharomyces pombe (strain 972 / ATCC 24843) (Fission yeast)).